The sequence spans 34 residues: MPPARIELATFALQVQRSTTKLRRLKIQLCCISK.

This is an uncharacterized protein from Saccharomyces cerevisiae (strain ATCC 204508 / S288c) (Baker's yeast).